The primary structure comprises 359 residues: Protein Wnt-8a (359 aa).

Positions 1-25 (MNPCQIFASLVMSICCHILSSTAWS) are cleaved as a signal peptide. Cys55 and Cys66 are disulfide-bonded. Asn104 is a glycosylation site (N-linked (GlcNAc...) asparagine). Intrachain disulfides connect Cys105–Cys113, Cys115–Cys133, Cys181–Cys195, Cys183–Cys190, Cys260–Cys298, Cys276–Cys291, Cys295–Cys337, Cys313–Cys328, Cys315–Cys325, and Cys320–Cys321. Ser187 carries O-palmitoleoyl serine lipidation. Residues Asn263 and Asn282 are each glycosylated (N-linked (GlcNAc...) asparagine). A glycan (N-linked (GlcNAc...) asparagine) is linked at Asn348.

The protein belongs to the Wnt family. In terms of processing, palmitoleoylation is required for efficient binding to frizzled receptors. Depalmitoleoylation leads to Wnt signaling pathway inhibition. Post-translationally, proteolytic processing by tiki1 and tiki2 promotes oxidation and formation of large disulfide-bond oligomers, leading to inactivation of wnt8. In terms of tissue distribution, expressed in the margin of the pregastrula embryo destined to be the future mesoderm.

The protein resides in the secreted. It localises to the extracellular space. It is found in the extracellular matrix. In terms of biological role, ligand for members of the frizzled family of seven transmembrane receptors. Required for mesoderm and neural ectoderm patterning during gastrulation. Involved in axis formation during embryonic development, via activation of canonical Wnt/CTNNB1 signaling. May be involved in the specification of the spatial patterns of expression of Gsc and other regulatory genes leading to the establishment of the embryonic axis. This chain is Protein Wnt-8a (wnt8a), found in Danio rerio (Zebrafish).